The sequence spans 783 residues: Pre-mRNA-splicing ATP-dependent RNA helicase prp28 (783 aa).

Residues 1–52 (MPGPPATAPPPEPIERPPTPPPPPPEDSAAPPPPPDMSAPPPPPQDELPPAP) are compositionally biased toward pro residues. A disordered region spans residues 1 to 193 (MPGPPATAPP…VDEDEAAAQA (193 aa)). 2 stretches are compositionally biased toward basic and acidic residues: residues 75-84 (ELVRKKREAD) and 94-114 (SKKE…EQSR). A compositionally biased stretch (polar residues) spans 118–135 (STNGASDTASVRSESATP). Residues 167–182 (SSNGNGNSNSNSNSNG) show a composition bias toward low complexity. Residues 343–371 (RSWAESGLPSRLLDLVHRVGYKDPTPIQR) carry the Q motif motif. The Helicase ATP-binding domain maps to 374–583 (IPIAMQSRDL…RKYLRRPAIV (210 aa)). Residue 387-394 (AVTGSGKT) coordinates ATP. The DEAD box motif lies at 502 to 505 (DEAD). A Helicase C-terminal domain is found at 594–757 (TVEQRVELIA…RVPDELRKHE (164 aa)). The segment at 752–783 (ELRKHEAAQQKPTRGFSKKNDESSAFGGKGGW) is disordered.

Belongs to the DEAD box helicase family. DDX23/PRP28 subfamily. As to quaternary structure, component of the U5 snRNP complex.

The protein localises to the cytoplasm. The protein resides in the nucleus. The catalysed reaction is ATP + H2O = ADP + phosphate + H(+). In terms of biological role, ATP-dependent RNA helicase involved in mRNA splicing. May destabilize the U1/5'-splice site duplex to permit an effective competition for the 5'-splice site by the U6 snRNA, resulting in the switch between U1 and U6 at the 5'-splice site. May also act to unwind the U4/U6 base-pairing interaction in the U4/U6/U5 snRNP, facilitating the first covalent step of splicing. The polypeptide is Pre-mRNA-splicing ATP-dependent RNA helicase prp28 (prp28) (Aspergillus terreus (strain NIH 2624 / FGSC A1156)).